The following is a 372-amino-acid chain: Queuine tRNA-ribosyltransferase (372 aa).

Catalysis depends on Asp89, which acts as the Proton acceptor. Residues 89-93, Asp161, and Gly232 each bind substrate; that span reads DSGGF. Residues 262-268 are RNA binding; sequence GIGDLPS. Catalysis depends on Asp281, which acts as the Nucleophile. The tract at residues 286-290 is RNA binding; important for wobble base 34 recognition; sequence TKAAR. The Zn(2+) site is built by Cys319, Cys321, Cys324, and His351.

This sequence belongs to the queuine tRNA-ribosyltransferase family. In terms of assembly, homodimer. Within each dimer, one monomer is responsible for RNA recognition and catalysis, while the other monomer binds to the replacement base PreQ1. Requires Zn(2+) as cofactor.

It carries out the reaction 7-aminomethyl-7-carbaguanine + guanosine(34) in tRNA = 7-aminomethyl-7-carbaguanosine(34) in tRNA + guanine. It participates in tRNA modification; tRNA-queuosine biosynthesis. In terms of biological role, catalyzes the base-exchange of a guanine (G) residue with the queuine precursor 7-aminomethyl-7-deazaguanine (PreQ1) at position 34 (anticodon wobble position) in tRNAs with GU(N) anticodons (tRNA-Asp, -Asn, -His and -Tyr). Catalysis occurs through a double-displacement mechanism. The nucleophile active site attacks the C1' of nucleotide 34 to detach the guanine base from the RNA, forming a covalent enzyme-RNA intermediate. The proton acceptor active site deprotonates the incoming PreQ1, allowing a nucleophilic attack on the C1' of the ribose to form the product. After dissociation, two additional enzymatic reactions on the tRNA convert PreQ1 to queuine (Q), resulting in the hypermodified nucleoside queuosine (7-(((4,5-cis-dihydroxy-2-cyclopenten-1-yl)amino)methyl)-7-deazaguanosine). In Chlamydia caviae (strain ATCC VR-813 / DSM 19441 / 03DC25 / GPIC) (Chlamydophila caviae), this protein is Queuine tRNA-ribosyltransferase.